A 152-amino-acid chain; its full sequence is Large ribosomal subunit protein eL29 (152 aa).

Over residues methionine 1–serine 26 the composition is skewed to basic residues. Positions methionine 1–leucine 32 are disordered. An N6-methyllysine modification is found at lysine 5. At serine 31 the chain carries Phosphoserine. The residue at position 33 (lysine 33) is an N6-acetyllysine. The segment at cysteine 119–glutamate 152 is disordered. A compositionally biased stretch (low complexity) spans proline 121–glutamate 152.

It belongs to the eukaryotic ribosomal protein eL29 family. In terms of assembly, component of the large ribosomal subunit.

Its subcellular location is the cytoplasm. Component of the large ribosomal subunit. The ribosome is a large ribonucleoprotein complex responsible for the synthesis of proteins in the cell. In Bos taurus (Bovine), this protein is Large ribosomal subunit protein eL29 (RPL29).